Consider the following 171-residue polypeptide: CS1 fimbrial subunit A (171 aa).

An N-terminal signal peptide occupies residues 1–23; it reads MKLKKTIGAMALATLFATMGASA.

It belongs to the fimbrial CS1 protein family.

It is found in the fimbrium. In terms of biological role, fimbriae (also called pili), polar filaments radiating from the surface of the bacterium to a length of 0.5-1.5 micrometers and numbering 100-300 per cell, enable bacteria to colonize the epithelium of specific host organs. The chain is CS1 fimbrial subunit A (csoA) from Escherichia coli.